The chain runs to 143 residues: Transcriptional regulator MraZ (143 aa).

SpoVT-AbrB domains lie at 5 to 47 and 76 to 119; these read QYEH…SLEE and AVEC…SKEV.

It belongs to the MraZ family. As to quaternary structure, forms oligomers.

The protein resides in the cytoplasm. Its subcellular location is the nucleoid. This Thermoanaerobacter sp. (strain X514) protein is Transcriptional regulator MraZ.